The following is a 351-amino-acid chain: Thiamine-phosphate synthase (351 aa).

Positions 1 to 128 (MKNPNIIQPE…SKIASEIRYE (128 aa)) are unknown. The thiamine-phosphate synthase stretch occupies residues 129–351 (IYTLEIEILN…IIIKELSHEN (223 aa)). Residues 180-184 (QHRFK) and Asn212 each bind 4-amino-2-methyl-5-(diphosphooxymethyl)pyrimidine. 2 residues coordinate Mg(2+): Asn213 and Asp232. A 4-amino-2-methyl-5-(diphosphooxymethyl)pyrimidine-binding site is contributed by Ser251. 277–279 (TLT) serves as a coordination point for 2-[(2R,5Z)-2-carboxy-4-methylthiazol-5(2H)-ylidene]ethyl phosphate. Lys280 contributes to the 4-amino-2-methyl-5-(diphosphooxymethyl)pyrimidine binding site. 2-[(2R,5Z)-2-carboxy-4-methylthiazol-5(2H)-ylidene]ethyl phosphate contacts are provided by residues Gly307 and 327–328 (VS).

This sequence belongs to the thiamine-phosphate synthase family.

The catalysed reaction is 2-[(2R,5Z)-2-carboxy-4-methylthiazol-5(2H)-ylidene]ethyl phosphate + 4-amino-2-methyl-5-(diphosphooxymethyl)pyrimidine + 2 H(+) = thiamine phosphate + CO2 + diphosphate. The enzyme catalyses 2-(2-carboxy-4-methylthiazol-5-yl)ethyl phosphate + 4-amino-2-methyl-5-(diphosphooxymethyl)pyrimidine + 2 H(+) = thiamine phosphate + CO2 + diphosphate. It catalyses the reaction 4-methyl-5-(2-phosphooxyethyl)-thiazole + 4-amino-2-methyl-5-(diphosphooxymethyl)pyrimidine + H(+) = thiamine phosphate + diphosphate. It participates in cofactor biosynthesis; thiamine diphosphate biosynthesis; thiamine phosphate from 4-amino-2-methyl-5-diphosphomethylpyrimidine and 4-methyl-5-(2-phosphoethyl)-thiazole: step 1/1. Its function is as follows. Condenses 4-methyl-5-(beta-hydroxyethyl)thiazole monophosphate (THZ-P) and 2-methyl-4-amino-5-hydroxymethyl pyrimidine pyrophosphate (HMP-PP) to form thiamine monophosphate (TMP). The chain is Thiamine-phosphate synthase from Prochlorococcus marinus subsp. pastoris (strain CCMP1986 / NIES-2087 / MED4).